The primary structure comprises 487 residues: Glutamate--tRNA ligase (487 aa).

Residues 10–20 carry the 'HIGH' region motif; it reads PSPTGYMHVGN. Residues 251–255 carry the 'KMSKS' region motif; the sequence is KLSKR. Lysine 254 contributes to the ATP binding site.

This sequence belongs to the class-I aminoacyl-tRNA synthetase family. Glutamate--tRNA ligase type 1 subfamily. Monomer.

The protein localises to the cytoplasm. It carries out the reaction tRNA(Glu) + L-glutamate + ATP = L-glutamyl-tRNA(Glu) + AMP + diphosphate. In terms of biological role, catalyzes the attachment of glutamate to tRNA(Glu) in a two-step reaction: glutamate is first activated by ATP to form Glu-AMP and then transferred to the acceptor end of tRNA(Glu). The polypeptide is Glutamate--tRNA ligase (Clostridium kluyveri (strain ATCC 8527 / DSM 555 / NBRC 12016 / NCIMB 10680 / K1)).